The sequence spans 90 residues: Probable Fe(2+)-trafficking protein (90 aa).

It belongs to the Fe(2+)-trafficking protein family.

Could be a mediator in iron transactions between iron acquisition and iron-requiring processes, such as synthesis and/or repair of Fe-S clusters in biosynthetic enzymes. The protein is Probable Fe(2+)-trafficking protein of Xylella fastidiosa (strain M23).